The following is a 486-amino-acid chain: Glycogen synthase (486 aa).

K15 is an ADP-alpha-D-glucose binding site.

Belongs to the glycosyltransferase 1 family. Bacterial/plant glycogen synthase subfamily.

It catalyses the reaction [(1-&gt;4)-alpha-D-glucosyl](n) + ADP-alpha-D-glucose = [(1-&gt;4)-alpha-D-glucosyl](n+1) + ADP + H(+). Its pathway is glycan biosynthesis; glycogen biosynthesis. Synthesizes alpha-1,4-glucan chains using ADP-glucose. The sequence is that of Glycogen synthase from Thermotoga maritima (strain ATCC 43589 / DSM 3109 / JCM 10099 / NBRC 100826 / MSB8).